Reading from the N-terminus, the 230-residue chain is Stachydrine N-demethylase reductase subunit Stc3 (230 aa).

It belongs to the non-flavoprotein flavin reductase family. In terms of assembly, the system is probably composed of an oxygenase subunit (Stc2) and two reductase subunits (Stc3 and Stc4).

Functionally, reductase involved in the catabolism of stachydrine (L-proline betaine), a source of carbon and nitrogen. Part of a Rieske-type oxygenase system that catalyzes the demethylation of stachydrine to produce N-methyl-L-proline (monomethylproline). This subunit is probably involved in the transfer of electrons from NAD(P)H to the catalytic subunit Stc2. The sequence is that of Stachydrine N-demethylase reductase subunit Stc3 from Rhizobium meliloti (strain 1021) (Ensifer meliloti).